Here is a 473-residue protein sequence, read N- to C-terminus: Glutamate--tRNA ligase (473 aa).

A 'HIGH' region motif is present at residues 11–21 (PSPTGFLHIGG). The 'KMSKS' region motif lies at 240 to 244 (KLSKR). Lys-243 serves as a coordination point for ATP.

Belongs to the class-I aminoacyl-tRNA synthetase family. Glutamate--tRNA ligase type 1 subfamily. As to quaternary structure, monomer.

It localises to the cytoplasm. The catalysed reaction is tRNA(Glu) + L-glutamate + ATP = L-glutamyl-tRNA(Glu) + AMP + diphosphate. Its function is as follows. Catalyzes the attachment of glutamate to tRNA(Glu) in a two-step reaction: glutamate is first activated by ATP to form Glu-AMP and then transferred to the acceptor end of tRNA(Glu). This is Glutamate--tRNA ligase from Rhodopseudomonas palustris (strain HaA2).